The sequence spans 375 residues: Phosphoglycerate kinase (375 aa).

13 residues coordinate (2R)-3-phosphoglycerate: valine 1, aspartate 2, phenylalanine 3, asparagine 4, arginine 17, serine 40, histidine 41, glycine 43, arginine 44, leucine 99, arginine 100, histidine 147, and arginine 148. Glycine 191 serves as a coordination point for ADP. Glycine 191 provides a ligand contact to CDP. 2 residues coordinate AMP: alanine 192 and lysine 193. Alanine 192 contributes to the ATP binding site. Alanine 192 provides a ligand contact to Mg(2+). A CDP-binding site is contributed by aspartate 196. Aspartate 196 is a binding site for Mg(2+). Lysine 197 lines the AMP pocket. An ATP-binding site is contributed by lysine 197. ADP is bound at residue glycine 215. Position 215 (glycine 215) interacts with CDP. Glycine 216 and glycine 290 together coordinate AMP. The ATP site is built by glycine 216 and glycine 290. 2 residues coordinate CDP: glycine 315 and phenylalanine 320. Phenylalanine 320 is an ADP binding site. Glutamate 321 serves as a coordination point for AMP. Glutamate 321, aspartate 352, and threonine 353 together coordinate ATP. Residue aspartate 352 participates in Mg(2+) binding.

This sequence belongs to the phosphoglycerate kinase family. As to quaternary structure, monomer. Mg(2+) serves as cofactor.

The enzyme catalyses (2R)-3-phosphoglycerate + ATP = (2R)-3-phospho-glyceroyl phosphate + ADP. It functions in the pathway carbohydrate degradation; glycolysis; pyruvate from D-glyceraldehyde 3-phosphate: step 2/5. In Tetrahymena pyriformis, this protein is Phosphoglycerate kinase (PGK).